We begin with the raw amino-acid sequence, 56 residues long: Large ribosomal subunit protein bL32A (56 aa).

Positions 1–56 are disordered; that stretch reads MAVPARRTSKAKKNKRRTHKGLTAPGLSRDSETGEYRMSHRISPDGTYKGRTIIEK. Basic residues predominate over residues 7-20; sequence RTSKAKKNKRRTHK. A compositionally biased stretch (basic and acidic residues) spans 29-38; it reads RDSETGEYRM.

The protein belongs to the bacterial ribosomal protein bL32 family.

The chain is Large ribosomal subunit protein bL32A (rpmF1) from Listeria innocua serovar 6a (strain ATCC BAA-680 / CLIP 11262).